The following is a 240-amino-acid chain: Ribonuclease P protein component (240 aa).

The disordered stretch occupies residues 1–140; the sequence is MDEKDLATQQ…KKAGGKGLVS (140 aa). Residues 40 to 51 are compositionally biased toward pro residues; that stretch reads APPPHRVIPPHP. Residues 47-123 form an insert region; sequence IPPHPGLRQD…PGPDRDGGSK (77 aa). The span at 122–132 shows a compositional bias: low complexity; that stretch reads SKASRASSPKK.

It belongs to the RnpA family. As to quaternary structure, consists of a catalytic RNA component (M1 or rnpB) and a protein subunit.

It carries out the reaction Endonucleolytic cleavage of RNA, removing 5'-extranucleotides from tRNA precursor.. In terms of biological role, RNaseP catalyzes the removal of the 5'-leader sequence from pre-tRNA to produce the mature 5'-terminus. It can also cleave other RNA substrates such as 4.5S RNA. The protein component plays an auxiliary but essential role in vivo by binding to the 5'-leader sequence and broadening the substrate specificity of the ribozyme. The chain is Ribonuclease P protein component from Thermus filiformis.